The primary structure comprises 491 residues: tRNA-2-methylthio-N(6)-dimethylallyladenosine synthase (491 aa).

The MTTase N-terminal domain maps to 54-172 (KTYHIKTFGC…ILNLLEQVIF (119 aa)). Cys63, Cys99, Cys133, Cys209, Cys213, and Cys216 together coordinate [4Fe-4S] cluster. The region spanning 195–426 (RTNNLKGFVN…NEMVKTFSKK (232 aa)) is the Radical SAM core domain. The region spanning 429 to 491 (EKYVNKVLDV…RFTLNGKMID (63 aa)) is the TRAM domain.

Belongs to the methylthiotransferase family. MiaB subfamily. In terms of assembly, monomer. Requires [4Fe-4S] cluster as cofactor.

The protein localises to the cytoplasm. It catalyses the reaction N(6)-dimethylallyladenosine(37) in tRNA + (sulfur carrier)-SH + AH2 + 2 S-adenosyl-L-methionine = 2-methylsulfanyl-N(6)-dimethylallyladenosine(37) in tRNA + (sulfur carrier)-H + 5'-deoxyadenosine + L-methionine + A + S-adenosyl-L-homocysteine + 2 H(+). Catalyzes the methylthiolation of N6-(dimethylallyl)adenosine (i(6)A), leading to the formation of 2-methylthio-N6-(dimethylallyl)adenosine (ms(2)i(6)A) at position 37 in tRNAs that read codons beginning with uridine. This is tRNA-2-methylthio-N(6)-dimethylallyladenosine synthase from Malacoplasma penetrans (strain HF-2) (Mycoplasma penetrans).